Reading from the N-terminus, the 437-residue chain is MDTKLDPWSSSDITDYSKLFEEFGISPFENVLPEIPSPHMYMRRKVIFGHRDYEQIAEAMRTGAPFSVMDGFMPSGKVHLGHKMVMDQIVWHQEMGASAFVGIADREAFSVRGFSWQKCREIGVEEYILSLIALGFKPDGLIYFQSGCGSVKDLAFELGAKVNFSELSAIYGFSGETSLSHMLSVATQAADILQPQLEEFGGPKPVVVPVGPDQDPHLRLTRGLAGKMNMFRVEEREDVKTGRKYLSVRGKTAQKEALQELKKRIPGKVKLYEEHIDVLEYPDLAGLEKLVREVTVEFGGYAFIPPASTYHRFMSGLQGGKMSSSIPESQIALTDSPKEGAKKVKRAKTGGCVTLEEQKKLGGKPEECSVFELMLFHLIASDEELLEIKQECISGTRMCGSCKQLAAEKMQEFLKDHQEKRELAREHLDEYRIIYKD.

The 'HIGH' region motif lies at P74–H82. Residues K321–S325 carry the 'KMSKS' region motif.

Belongs to the class-I aminoacyl-tRNA synthetase family.

Its subcellular location is the cytoplasm. It carries out the reaction tRNA(Trp) + L-tryptophan + ATP = L-tryptophyl-tRNA(Trp) + AMP + diphosphate + H(+). The protein is Tryptophan--tRNA ligase of Methanosarcina acetivorans (strain ATCC 35395 / DSM 2834 / JCM 12185 / C2A).